We begin with the raw amino-acid sequence, 388 residues long: Phosphopentomutase (388 aa).

The Mn(2+) site is built by D11, D283, H288, D324, H325, and H336.

Belongs to the phosphopentomutase family. It depends on Mn(2+) as a cofactor.

The protein resides in the cytoplasm. The enzyme catalyses 2-deoxy-alpha-D-ribose 1-phosphate = 2-deoxy-D-ribose 5-phosphate. The catalysed reaction is alpha-D-ribose 1-phosphate = D-ribose 5-phosphate. The protein operates within carbohydrate degradation; 2-deoxy-D-ribose 1-phosphate degradation; D-glyceraldehyde 3-phosphate and acetaldehyde from 2-deoxy-alpha-D-ribose 1-phosphate: step 1/2. Functionally, isomerase that catalyzes the conversion of deoxy-ribose 1-phosphate (dRib-1-P) and ribose 1-phosphate (Rib-1-P) to deoxy-ribose 5-phosphate (dRib-5-P) and ribose 5-phosphate (Rib-5-P), respectively. The polypeptide is Phosphopentomutase (Anaeromyxobacter dehalogenans (strain 2CP-1 / ATCC BAA-258)).